The following is a 441-amino-acid chain: Endothelin receptor type B (441 aa).

A signal peptide spans 1–26 (MQPPPSLCGLALLALVLACGMAEVWG). The Extracellular segment spans residues 27 to 100 (EEREMPSAPA…RPTEIKDTFK (74 aa)). Residues 30–90 (EMPSAPATPP…APRRTPPPCQ (61 aa)) are disordered. Residues 47 to 65 (LTPSTKTSWPRDSNASLPR) are compositionally biased toward polar residues. N-linked (GlcNAc...) asparagine glycosylation is present at N60. The chain crosses the membrane as a helical span at residues 101–125 (YINTVVSCLVFVLGIIGNSTLLRII). Topologically, residues 126 to 136 (YKNKCMRNGPN) are cytoplasmic. A helical membrane pass occupies residues 137–162 (ILIASLALGDLLHIIIDIPINVYKLL). Topologically, residues 163–174 (AEDWPFGAEMCK) are extracellular. C173 and C254 are oxidised to a cystine. The chain crosses the membrane as a helical span at residues 175 to 196 (LVPFIQKASVGITVLSLCALSI). Residues 197-217 (DRYRAVASWSRIKGIGVPKWT) are Cytoplasmic-facing. The chain crosses the membrane as a helical span at residues 218–242 (AVEIVLIWVVSVILAVPEAIGFNLV). Residues 243–270 (TIDYKGSYLRICLLNPTQKTAFMQFYKT) are Extracellular-facing. A helical transmembrane segment spans residues 271-295 (AKDWWLFSFYFCLPLAITAFFYTLM). Residues 296 to 323 (TCEMLRKKSGMQIALNDHLKQRREVAKT) are Cytoplasmic-facing. S304 is modified (phosphoserine). A helical membrane pass occupies residues 324–349 (VFCLVLVFGLCWLALHLSRILKLTLY). Topologically, residues 350-361 (DQNDPNRCELLS) are extracellular. Residues 362–388 (FLLVLDYIGINMASLNSCINPIALYLV) form a helical membrane-spanning segment. At 389-441 (SKRFKNCFKSCLCCWCQSFEEKQSLEEKQSCLKFKANDHGYDNFRSSNKYSSS) the chain is on the cytoplasmic side. Residues C402 and C404 are each lipidated (S-palmitoyl cysteine). Residue S418 is modified to Phosphoserine. Y438 carries the post-translational modification Phosphotyrosine. S439, S440, and S441 each carry phosphoserine.

This sequence belongs to the G-protein coupled receptor 1 family. Endothelin receptor subfamily. EDNRB sub-subfamily.

It is found in the cell membrane. Functionally, non-specific receptor for endothelin 1, 2, and 3. Mediates its action by association with G proteins that activate a phosphatidylinositol-calcium second messenger system. The polypeptide is Endothelin receptor type B (EDNRB) (Oryctolagus cuniculus (Rabbit)).